The primary structure comprises 86 residues: ATP synthase subunit c (86 aa).

2 helical membrane passes run 8-28 (VLGC…GPGI) and 64-84 (TTGL…PLLG).

It belongs to the ATPase C chain family. As to quaternary structure, F-type ATPases have 2 components, F(1) - the catalytic core - and F(0) - the membrane proton channel. F(1) has five subunits: alpha(3), beta(3), gamma(1), delta(1), epsilon(1). F(0) has three main subunits: a(1), b(2) and c(10-14). The alpha and beta chains form an alternating ring which encloses part of the gamma chain. F(1) is attached to F(0) by a central stalk formed by the gamma and epsilon chains, while a peripheral stalk is formed by the delta and b chains.

The protein localises to the cell membrane. Functionally, f(1)F(0) ATP synthase produces ATP from ADP in the presence of a proton or sodium gradient. F-type ATPases consist of two structural domains, F(1) containing the extramembraneous catalytic core and F(0) containing the membrane proton channel, linked together by a central stalk and a peripheral stalk. During catalysis, ATP synthesis in the catalytic domain of F(1) is coupled via a rotary mechanism of the central stalk subunits to proton translocation. In terms of biological role, key component of the F(0) channel; it plays a direct role in translocation across the membrane. A homomeric c-ring of between 10-14 subunits forms the central stalk rotor element with the F(1) delta and epsilon subunits. In Lachnoclostridium phytofermentans (strain ATCC 700394 / DSM 18823 / ISDg) (Clostridium phytofermentans), this protein is ATP synthase subunit c.